A 292-amino-acid chain; its full sequence is Homoserine kinase (292 aa).

84-94 lines the ATP pocket; that stretch reads PLARGMGSSSA.

Belongs to the GHMP kinase family. Homoserine kinase subfamily.

The protein resides in the cytoplasm. It catalyses the reaction L-homoserine + ATP = O-phospho-L-homoserine + ADP + H(+). It functions in the pathway amino-acid biosynthesis; L-threonine biosynthesis; L-threonine from L-aspartate: step 4/5. Catalyzes the ATP-dependent phosphorylation of L-homoserine to L-homoserine phosphate. This is Homoserine kinase from Campylobacter lari (strain RM2100 / D67 / ATCC BAA-1060).